We begin with the raw amino-acid sequence, 73 residues long: Sec-independent protein translocase protein TatA (73 aa).

Residues 1 to 21 traverse the membrane as a helical segment; that stretch reads MFGLGAPELILILILALIIFG. Residues 52 to 73 are disordered; it reads EAAKIDDGNNNSDKEKATRQAS.

The protein belongs to the TatA/E family. As to quaternary structure, forms a complex with TatC.

The protein resides in the cell membrane. Its function is as follows. Part of the twin-arginine translocation (Tat) system that transports large folded proteins containing a characteristic twin-arginine motif in their signal peptide across membranes. TatA could form the protein-conducting channel of the Tat system. This chain is Sec-independent protein translocase protein TatA, found in Moorella thermoacetica (strain ATCC 39073 / JCM 9320).